The chain runs to 207 residues: Glutathione S-transferase 4 (207 aa).

A GST N-terminal domain is found at 2–79 (PNYKLLYFDA…YLARKFGLAG (78 aa)). Residues tyrosine 8, tryptophan 39, lysine 43, 49–51 (GQL), and 63–64 (QS) contribute to the glutathione site. Residues 81–207 (TAEEEAYADS…YVATRKDSIV (127 aa)) enclose the GST C-terminal domain.

Belongs to the GST superfamily. Sigma family.

The enzyme catalyses RX + glutathione = an S-substituted glutathione + a halide anion + H(+). Functionally, conjugation of reduced glutathione to a wide number of exogenous and endogenous hydrophobic electrophiles. May play a role in the detoxification of reactive oxygen species produced during pathogenic bacterial infection. The polypeptide is Glutathione S-transferase 4 (Caenorhabditis elegans).